Here is a 273-residue protein sequence, read N- to C-terminus: Dermonecrotic toxin LapSicTox-alphaIB1b2 (273 aa).

The active site involves H5. Positions 25 and 27 each coordinate Mg(2+). Catalysis depends on H41, which acts as the Nucleophile. Intrachain disulfides connect C45–C51 and C47–C190. D85 contacts Mg(2+). N-linked (GlcNAc...) asparagine glycosylation is present at N250.

The protein belongs to the arthropod phospholipase D family. Class II subfamily. The cofactor is Mg(2+). Expressed by the venom gland.

The protein resides in the secreted. The catalysed reaction is an N-(acyl)-sphingosylphosphocholine = an N-(acyl)-sphingosyl-1,3-cyclic phosphate + choline. It catalyses the reaction an N-(acyl)-sphingosylphosphoethanolamine = an N-(acyl)-sphingosyl-1,3-cyclic phosphate + ethanolamine. It carries out the reaction a 1-acyl-sn-glycero-3-phosphocholine = a 1-acyl-sn-glycero-2,3-cyclic phosphate + choline. The enzyme catalyses a 1-acyl-sn-glycero-3-phosphoethanolamine = a 1-acyl-sn-glycero-2,3-cyclic phosphate + ethanolamine. Its function is as follows. Dermonecrotic toxins cleave the phosphodiester linkage between the phosphate and headgroup of certain phospholipids (sphingolipid and lysolipid substrates), forming an alcohol (often choline) and a cyclic phosphate. This toxin acts on sphingomyelin (SM). It may also act on ceramide phosphoethanolamine (CPE), lysophosphatidylcholine (LPC) and lysophosphatidylethanolamine (LPE), but not on lysophosphatidylserine (LPS), and lysophosphatidylglycerol (LPG). It acts by transphosphatidylation, releasing exclusively cyclic phosphate products as second products. Induces dermonecrosis, hemolysis, increased vascular permeability, edema, inflammatory response, and platelet aggregation. The sequence is that of Dermonecrotic toxin LapSicTox-alphaIB1b2 from Loxosceles apachea (Apache recluse spider).